We begin with the raw amino-acid sequence, 702 residues long: Methionine--tRNA ligase (702 aa).

The 'HIGH' region motif lies at Pro-14–His-24. Zn(2+) is bound by residues Cys-146, Cys-149, Cys-159, and Cys-162. A 'KMSKS' region motif is present at residues Lys-344–Ser-348. Lys-347 is an ATP binding site. A tRNA-binding domain is found at Glu-601–Gln-702.

It belongs to the class-I aminoacyl-tRNA synthetase family. MetG type 1 subfamily. As to quaternary structure, homodimer. The cofactor is Zn(2+).

The protein localises to the cytoplasm. It catalyses the reaction tRNA(Met) + L-methionine + ATP = L-methionyl-tRNA(Met) + AMP + diphosphate. In terms of biological role, is required not only for elongation of protein synthesis but also for the initiation of all mRNA translation through initiator tRNA(fMet) aminoacylation. This chain is Methionine--tRNA ligase, found in Chlorobium phaeobacteroides (strain DSM 266 / SMG 266 / 2430).